The sequence spans 137 residues: MPLQIFNTTKRTIDETLLAEVIRLVIGEEGGAVGSIEAIYCGNKMIRRINRDFLGHDYVTDTITFGYNEGGEVDGEFYISLDVIESNARRFGVSFEDELLRVTIHSALHLMGYDDETSELRAAMSLREDHYLYRLRH.

Residues His-105, His-109, and Asp-115 each coordinate Zn(2+).

This sequence belongs to the endoribonuclease YbeY family. Requires Zn(2+) as cofactor.

The protein resides in the cytoplasm. Functionally, single strand-specific metallo-endoribonuclease involved in late-stage 70S ribosome quality control and in maturation of the 3' terminus of the 16S rRNA. The protein is Endoribonuclease YbeY of Chlorobaculum tepidum (strain ATCC 49652 / DSM 12025 / NBRC 103806 / TLS) (Chlorobium tepidum).